We begin with the raw amino-acid sequence, 673 residues long: ATP-binding cassette sub-family G member 8 (673 aa).

Residues 1–11 are compositionally biased toward basic and acidic residues; it reads MAGKAAEERGL. The disordered stretch occupies residues 1 to 25; it reads MAGKAAEERGLPKGATPQDTSGLQD. Topologically, residues 1–416 are cytoplasmic; that stretch reads MAGKAAEERG…ISNDFRDLPT (416 aa). The 267-residue stretch at 47–313 folds into the ABC transporter domain; it reads LEVRDLNYQV…FTAIGYPCPR (267 aa). The region spanning 411 to 665 is the ABC transmembrane type-2 domain; sequence FRDLPTLLIH…VLYYVSLRFI (255 aa). The helical transmembrane segment at 417–437 threads the bilayer; it reads LLIHGAEACLMSMTIGFLYFG. At 438 to 447 the chain is on the extracellular side; sequence HGSIQLSFMD. The chain crosses the membrane as a helical span at residues 448 to 468; it reads TAALLFMIGALIPFNVILDVI. Residues 469–497 are Cytoplasmic-facing; sequence SKCYSERAMLYYELEDGLYTTGPYFFAKI. Residues 498–518 traverse the membrane as a helical segment; the sequence is LGELPEHCAYIIIYGMPTYWL. At 519–527 the chain is on the extracellular side; it reads ANLRPGLQP. A helical membrane pass occupies residues 528 to 548; sequence FLLHFLLVWLVVFCCRIMALA. At 549–555 the chain is on the cytoplasmic side; the sequence is AAALLPT. Residues 556-576 form a helical membrane-spanning segment; the sequence is FHMASFFSNALYNSFYLAGGF. The Extracellular portion of the chain corresponds to 577–639; the sequence is MINLSSLWTV…LSVMELDSYP (63 aa). Asn-619 carries an N-linked (GlcNAc...) asparagine glycan. The chain crosses the membrane as a helical span at residues 640–660; sequence LYAIYLIVIGLSGGFMVLYYV. At 661-673 the chain is on the cytoplasmic side; the sequence is SLRFIKQKPSQDW.

This sequence belongs to the ABC transporter superfamily. ABCG family. Eye pigment precursor importer (TC 3.A.1.204) subfamily. Heterodimer with ABCG8. The cofactor is Mg(2+). Post-translationally, N-glycosylated. As to expression, predominantly expressed in the liver. Low expression levels in the small intestine and colon. Very low levels in other tissues, including brain, heart and spleen.

It localises to the cell membrane. Its subcellular location is the apical cell membrane. It carries out the reaction cholesterol(in) + ATP + H2O = cholesterol(out) + ADP + phosphate + H(+). The catalysed reaction is sitosterol(in) + ATP + H2O = sitosterol(out) + ADP + phosphate + H(+). Its activity is regulated as follows. The ATPase activity of the heterodimer is stimulated by cholate. Taurocholate, glycocholate, taurochenodeoxycholate, glycochenodeoxycholate and taurodeoxycholate also stimulate ATPase activity, but to a lower degree. Glycodeoxycholate has no significant effect on ATPase activity. ATPase activity is inhibited by vanadate and by berillium fluoride. In terms of biological role, ABCG5 and ABCG8 form an obligate heterodimer that mediates Mg(2+)- and ATP-dependent sterol transport across the cell membrane. Plays an essential role in the selective transport of the dietary cholesterol in and out of the enterocytes and in the selective sterol excretion by the liver into bile. Required for normal sterol homeostasis. The heterodimer with ABCG5 has ATPase activity. The polypeptide is ATP-binding cassette sub-family G member 8 (Homo sapiens (Human)).